The sequence spans 372 residues: Aminomethyltransferase (372 aa).

Belongs to the GcvT family. In terms of assembly, the glycine cleavage system is composed of four proteins: P, T, L and H.

The catalysed reaction is N(6)-[(R)-S(8)-aminomethyldihydrolipoyl]-L-lysyl-[protein] + (6S)-5,6,7,8-tetrahydrofolate = N(6)-[(R)-dihydrolipoyl]-L-lysyl-[protein] + (6R)-5,10-methylene-5,6,7,8-tetrahydrofolate + NH4(+). Functionally, the glycine cleavage system catalyzes the degradation of glycine. This is Aminomethyltransferase from Burkholderia mallei (strain NCTC 10247).